A 146-amino-acid chain; its full sequence is Large ribosomal subunit protein uL13 (146 aa).

Positions A126–G146 are disordered.

The protein belongs to the universal ribosomal protein uL13 family. In terms of assembly, part of the 50S ribosomal subunit.

Its function is as follows. This protein is one of the early assembly proteins of the 50S ribosomal subunit, although it is not seen to bind rRNA by itself. It is important during the early stages of 50S assembly. This chain is Large ribosomal subunit protein uL13, found in Roseiflexus castenholzii (strain DSM 13941 / HLO8).